Consider the following 120-residue polypeptide: Glycine cleavage system H protein (120 aa).

One can recognise a Lipoyl-binding domain in the interval 17–99 (VATVGITNYA…QGAGWFFKLK (83 aa)). Lysine 58 bears the N6-lipoyllysine mark.

The protein belongs to the GcvH family. The glycine cleavage system is composed of four proteins: P, T, L and H. Requires (R)-lipoate as cofactor.

Its function is as follows. The glycine cleavage system catalyzes the degradation of glycine. The H protein shuttles the methylamine group of glycine from the P protein to the T protein. The protein is Glycine cleavage system H protein of Rhizobium leguminosarum bv. trifolii (strain WSM2304).